Reading from the N-terminus, the 901-residue chain is Aconitate hydratase A (901 aa).

The [4Fe-4S] cluster site is built by C443, C509, and C512.

It belongs to the aconitase/IPM isomerase family. Monomer. [4Fe-4S] cluster is required as a cofactor.

It carries out the reaction citrate = D-threo-isocitrate. It catalyses the reaction (2S,3R)-3-hydroxybutane-1,2,3-tricarboxylate = 2-methyl-cis-aconitate + H2O. It participates in carbohydrate metabolism; tricarboxylic acid cycle; isocitrate from oxaloacetate: step 2/2. It functions in the pathway organic acid metabolism; propanoate degradation. Its function is as follows. Involved in the catabolism of short chain fatty acids (SCFA) via the tricarboxylic acid (TCA)(acetyl degradation route) and probably the 2-methylcitrate cycle I (propionate degradation route). Catalyzes the reversible isomerization of citrate to isocitrate via cis-aconitate. Could catalyze the hydration of 2-methyl-cis-aconitate to yield (2R,3S)-2-methylisocitrate. The apo form of AcnA functions as a RNA-binding regulatory protein. This is Aconitate hydratase A (acnA) from Staphylococcus epidermidis (strain ATCC 35984 / DSM 28319 / BCRC 17069 / CCUG 31568 / BM 3577 / RP62A).